The chain runs to 106 residues: Iron-sulfur cluster assembly protein CyaY (106 aa).

Belongs to the frataxin family.

Functionally, involved in iron-sulfur (Fe-S) cluster assembly. May act as a regulator of Fe-S biogenesis. This chain is Iron-sulfur cluster assembly protein CyaY, found in Dickeya chrysanthemi (Pectobacterium chrysanthemi).